Here is an 81-residue protein sequence, read N- to C-terminus: Putative membrane protein insertion efficiency factor (81 aa).

The disordered stretch occupies residues 61-81 (NDGGYDPVPPAPSSRTSSIAE).

The protein belongs to the UPF0161 family.

Its subcellular location is the cell inner membrane. Functionally, could be involved in insertion of integral membrane proteins into the membrane. The protein is Putative membrane protein insertion efficiency factor of Pseudomonas putida (strain ATCC 47054 / DSM 6125 / CFBP 8728 / NCIMB 11950 / KT2440).